A 913-amino-acid polypeptide reads, in one-letter code: Trafficking kinesin-binding protein 2 (913 aa).

The span at 11-21 (SQTGEENLMSS) shows a compositional bias: polar residues. The segment at 11–31 (SQTGEENLMSSNHRDSESITD) is disordered. The HAP1 N-terminal domain maps to 48–353 (EEQLPQYKLR…QEEIKELRNK (306 aa)). Residues 134–355 (QALLKRNHVL…EIKELRNKAG (222 aa)) are a coiled coil. The tract at residues 359–507 (HLCFSQAYGV…KQFFAEEWER (149 aa)) is interaction with HGS. The interval 442–478 (ESGVQQTEDKTLPNQGSSTEVPGNSHPRDPPGLPEDS) is disordered. Residues 453–463 (LPNQGSSTEVP) show a composition bias toward polar residues. A coiled-coil region spans residues 502 to 519 (AEEWERKLQILAEQEEEV). Composition is skewed to low complexity over residues 688–704 (SSGF…GSAS) and 780–789 (PSQSPCSSPV). Disordered stretches follow at residues 688–707 (SSGF…SNTA) and 769–790 (ALAT…SPVP).

The protein belongs to the milton family. As to quaternary structure, interacts with RHOT1/Miro-1 and RHOT2/Miro-2. Interacts with GABA-A receptor and O-GlcNAc transferase. Interacts with HGS. Post-translationally, O-glycosylated. As to expression, present in heart and brain (at protein level).

Its subcellular location is the cytoplasm. It localises to the early endosome. The protein resides in the mitochondrion. May regulate endosome-to-lysosome trafficking of membrane cargo, including EGFR. In Rattus norvegicus (Rat), this protein is Trafficking kinesin-binding protein 2 (Trak2).